The following is a 497-amino-acid chain: Signal recognition particle receptor FtsY (497 aa).

Disordered regions lie at residues 1–63 (MAKE…TEAE) and 79–130 (AESE…EWQA). Residues 87–96 (EAEVVAQPEP) show a composition bias toward low complexity. Residues 300-307 (GVNGVGKT), 382-386 (DTAGR), and 446-449 (TKLD) each bind GTP.

Belongs to the GTP-binding SRP family. FtsY subfamily. In terms of assembly, part of the signal recognition particle protein translocation system, which is composed of SRP and FtsY. SRP is a ribonucleoprotein composed of Ffh and a 4.5S RNA molecule. Binds to SecY. Proteolytically cleaved. The cleavage may regulate function and subcellular location of FtsY. Full-length FtsY is found primarily associated with the membrane, while cleaved protein is predominantly present in the cytoplasm.

It localises to the cell inner membrane. It is found in the cytoplasm. The catalysed reaction is GTP + H2O = GDP + phosphate + H(+). With respect to regulation, conformation of the Ffh-FtsY complex and regulation of its GTPase activity are modulated by the 4.5S RNA. Formation of the FfH-FtsY complex leads to a mutual stimulation of both GTPases. Functionally, involved in targeting and insertion of nascent membrane proteins into the cytoplasmic membrane. Acts as a receptor for the complex formed by the signal recognition particle (SRP) and the ribosome-nascent chain (RNC). Interaction with SRP-RNC leads to the transfer of the RNC complex to the Sec translocase for insertion into the membrane, the hydrolysis of GTP by both Ffh and FtsY, and the dissociation of the SRP-FtsY complex into the individual components. The polypeptide is Signal recognition particle receptor FtsY (Escherichia coli (strain K12)).